A 357-amino-acid chain; its full sequence is 3-isopropylmalate dehydrogenase (357 aa).

The substrate site is built by arginine 99, arginine 109, arginine 133, and aspartate 223. The Mg(2+) site is built by aspartate 223, aspartate 247, and aspartate 251. 283-295 serves as a coordination point for NAD(+); it reads GSAPDIAGEQRAD.

It belongs to the isocitrate and isopropylmalate dehydrogenases family. LeuB type 2 subfamily. Homodimer. It depends on Mg(2+) as a cofactor. Mn(2+) is required as a cofactor.

Its subcellular location is the cytoplasm. It catalyses the reaction (2R,3S)-3-isopropylmalate + NAD(+) = 4-methyl-2-oxopentanoate + CO2 + NADH. Its pathway is amino-acid biosynthesis; L-leucine biosynthesis; L-leucine from 3-methyl-2-oxobutanoate: step 3/4. Catalyzes the oxidation of 3-carboxy-2-hydroxy-4-methylpentanoate (3-isopropylmalate) to 3-carboxy-4-methyl-2-oxopentanoate. The product decarboxylates to 4-methyl-2 oxopentanoate. The polypeptide is 3-isopropylmalate dehydrogenase (Leifsonia xyli subsp. xyli (strain CTCB07)).